The primary structure comprises 89 residues: Small ribosomal subunit protein uS15 (89 aa).

This sequence belongs to the universal ribosomal protein uS15 family. Part of the 30S ribosomal subunit. Forms a bridge to the 50S subunit in the 70S ribosome, contacting the 23S rRNA.

In terms of biological role, one of the primary rRNA binding proteins, it binds directly to 16S rRNA where it helps nucleate assembly of the platform of the 30S subunit by binding and bridging several RNA helices of the 16S rRNA. Functionally, forms an intersubunit bridge (bridge B4) with the 23S rRNA of the 50S subunit in the ribosome. This is Small ribosomal subunit protein uS15 from Buchnera aphidicola subsp. Baizongia pistaciae (strain Bp).